The following is a 303-amino-acid chain: Putative ankyrin repeat protein R601 (303 aa).

4 ANK repeats span residues 86-115 (DDNM…DVTV), 117-146 (NNFA…DITV), 147-176 (DNYF…NVDS), and 200-233 (NADV…DVSY).

This is Putative ankyrin repeat protein R601 from Acanthamoeba polyphaga (Amoeba).